A 659-amino-acid chain; its full sequence is Endoglucanase A (659 aa).

Residues 1–500 (MLIFETYLIL…SKLPNFPPKE (500 aa)) are catalytic. Aspartate 101 serves as the catalytic Nucleophile. Residues 413-433 (NSPKHPHHRTAHGSWSNQLTN) are disordered. Catalysis depends on residues histidine 419, aspartate 457, and glutamate 466. The CBM3 domain occupies 501 to 658 (QVEDEFFVEA…GVLVFGTLPD (158 aa)).

It belongs to the glycosyl hydrolase 9 (cellulase E) family.

The protein localises to the secreted. It catalyses the reaction Endohydrolysis of (1-&gt;4)-beta-D-glucosidic linkages in cellulose, lichenin and cereal beta-D-glucans.. Its activity is regulated as follows. Strongly inhibited by ZnCl(2) and by EDTA. Functionally, active on carboxymethyl cellulose and carboxymethyl cellulose-RBB but not avicel, xanthan gum, carboxymethyl-curdulan-RBB or carboxymethyl-xylan-RBB. The sequence is that of Endoglucanase A (eglA) from Bacillus pumilus (Bacillus mesentericus).